We begin with the raw amino-acid sequence, 420 residues long: Polymerase delta-interacting protein 3 (420 aa).

Ala-2 is modified (N-acetylalanine). Ser-5 carries the phosphoserine modification. Arg-33 is modified (omega-N-methylarginine). Ser-127 is modified (phosphoserine). A Phosphothreonine modification is found at Thr-140. Lys-200 is covalently cross-linked (Glycyl lysine isopeptide (Lys-Gly) (interchain with G-Cter in SUMO2)). Residues Ser-215 and Ser-217 each carry the phosphoserine modification. Residue Lys-223 forms a Glycyl lysine isopeptide (Lys-Gly) (interchain with G-Cter in SUMO2) linkage. Position 244 is a phosphoserine (Ser-244). A Glycyl lysine isopeptide (Lys-Gly) (interchain with G-Cter in SUMO2) cross-link involves residue Lys-248. The segment at 256-277 (TLVNKEEPPKELPPAEPVLSPL) is disordered. Phosphoserine is present on Ser-275. The RRM domain occupies 280-351 (TKMTVNNLHP…QPMKCNLHMN (72 aa)). The tract at residues 369-394 (PSVKKESELPRRGNPASSNPPAEVDP) is disordered. A compositionally biased stretch (basic and acidic residues) spans 370-379 (SVKKESELPR). A Glycyl lysine isopeptide (Lys-Gly) (interchain with G-Cter in SUMO2) cross-link involves residue Lys-372. Position 385 is a phosphoserine (Ser-385). A Glycyl lysine isopeptide (Lys-Gly) (interchain with G-Cter in SUMO2) cross-link involves residue Lys-417.

As to quaternary structure, interacts with POLD2. Interacts with NCBP1 and EIF4A3. Associates with the multiprotein exon junction complex (EJC). Interacts with RPS6KB1 (activated). Interacts with ERH. Interacts with THOC2, DDX39B and ZC3H11A; the interactions are ATP-dependent and indicative for an association with the TREX complex.

Its subcellular location is the nucleus. The protein resides in the nucleus speckle. The protein localises to the cytoplasm. In terms of biological role, is involved in regulation of translation. Is preferentially associated with CBC-bound spliced mRNA-protein complexes during the pioneer round of mRNA translation. Contributes to enhanced translational efficiency of spliced over nonspliced mRNAs. Recruits activated ribosomal protein S6 kinase beta-1 I/RPS6KB1 to newly synthesized mRNA. Involved in nuclear mRNA export; probably mediated by association with the TREX complex. This Mus musculus (Mouse) protein is Polymerase delta-interacting protein 3 (Poldip3).